We begin with the raw amino-acid sequence, 295 residues long: Zygote arrest protein 1.S (295 aa).

Disordered stretches follow at residues 80–115 (SVQC…TKTV) and 144–186 (EKGE…APAQ). A compositionally biased stretch (basic and acidic residues) spans 144–176 (EKGEAVRSEGSEGGRQEGKQGDGEIKEQMKMDK). Residues 197-280 (KYGYYHCKDC…RQDLCGRCKG (84 aa)) form a 3CxxC-type zinc finger.

The protein belongs to the ZAR1 family. In terms of tissue distribution, ovary. Also expressed in lung and muscle.

It is found in the cytoplasm. It localises to the cytoplasmic ribonucleoprotein granule. Functionally, mRNA-binding protein required for maternal mRNA storage, translation and degradation during oocyte maturation. Probably promotes formation of some phase-separated membraneless compartment that stores maternal mRNAs in oocytes: acts by undergoing liquid-liquid phase separation upon binding to maternal mRNAs. Binds to the 3'-UTR of maternal mRNAs in immature oocytes, inhibiting their translation. This Xenopus laevis (African clawed frog) protein is Zygote arrest protein 1.S (zar1.S).